The chain runs to 4660 residues: Low-density lipoprotein receptor-related protein 2 (4660 aa).

The N-terminal stretch at 1–25 is a signal peptide; that stretch reads MERGAAAAAWMLLLAIAACLEPVSS. Residues 26–4425 lie on the Extracellular side of the membrane; it reads QECGSGNFRC…LSRGIPPGTT (4400 aa). 6 consecutive LDL-receptor class A domains span residues 27-63, 66-104, 107-143, 141-180, 182-218, and 221-257; these read ECGS…IGCP, SCES…QNCA, TCSA…RNCH, NCHY…ANCT, LCSQ…RNCN, and TCGG…DGCE. 18 disulfide bridges follow: C28/C40, C35/C53, C47/C62, C67/C80, C74/C93, C87/C103, C108/C120, C115/C133, C127/C142, C142/C157, C152/C170, C164/C179, C183/C195, C190/C208, C202/C217, C222/C234, C229/C247, and C241/C256. 2 N-linked (GlcNAc...) asparagine glycosylation sites follow: N159 and N178. A glycan (N-linked (GlcNAc...) asparagine) is linked at N259. Residues 264-307 enclose the LDL-receptor class A 7 domain; that stretch reads RCYPREWACPGSGRCISIDKVCDGVPDCPEGDDENNVTSGRTCG. Disulfide bonds link C265-C278, C272-C291, and C285-C306. N299 and N340 each carry an N-linked (GlcNAc...) asparagine glycan. Residues 347–382 form the EGF-like 1; calcium-binding domain; it reads DFDDCQIWGICDQKCENRQGRHQCLCEEGYILERGQ. 2 disulfide bridges follow: C351–C361 and C357–C370. LDL-receptor class B repeat units lie at residues 435–477, 478–520, 521–567, and 568–612; these read HRVF…DWIN, NKLY…DPTV, GYLF…DLVS, and KRVY…FEEH. N462 carries an N-linked (GlcNAc...) asparagine glycan. Residue N657 is glycosylated (N-linked (GlcNAc...) asparagine). LDL-receptor class B repeat units lie at residues 752–794, 795–836, 837–880, and 881–924; these read STVF…DWIS, RNLY…HPTA, GYMF…DWSA, and SRLY…FKDN. N865 is a glycosylation site (N-linked (GlcNAc...) asparagine). The 37-residue stretch at 1024-1060 folds into the LDL-receptor class A 8 domain; that stretch reads QCGSLSFPCNNGKCVPSFFRCDGVDDCHDNSDEHQCG. Intrachain disulfides connect C1025–C1037, C1032–C1050, and C1044–C1059. The N-linked (GlcNAc...) asparagine glycan is linked to N1063. LDL-receptor class A domains are found at residues 1065 to 1102, 1109 to 1145, 1149 to 1185, 1187 to 1224, 1230 to 1268, 1271 to 1307, and 1312 to 1350; these read TCSP…QNCP, TCPS…KNCQ, TCQP…AGCV, NCTS…AGCP, MCHP…TGCV, TCSP…KDCP, and HCPS…PLCN. 9 disulfides stabilise this stretch: C1066–C1079, C1073–C1092, C1086–C1101, C1110–C1122, C1117–C1135, C1129–C1144, C1150–C1162, C1157–C1175, and C1169–C1184. Residues W1127, D1130, D1132, D1134, D1140, and E1141 each coordinate Ca(2+). Residue N1187 is glycosylated (N-linked (GlcNAc...) asparagine). 18 disulfide bridges follow: C1188–C1201, C1195–C1214, C1208–C1223, C1231–C1244, C1238–C1257, C1251–C1267, C1272–C1284, C1279–C1297, C1291–C1306, C1313–C1326, C1320–C1339, C1333–C1349, C1354–C1365, C1361–C1374, C1376–C1389, C1395–C1405, C1401–C1414, and C1416–C1429. Ca(2+) contacts are provided by Y1206, D1209, V1211, D1213, D1219, and E1220. N1328 and N1341 each carry an N-linked (GlcNAc...) asparagine glycan. The 41-residue stretch at 1350–1390 folds into the EGF-like 2 domain; the sequence is NQDSCSHFNGGCTHQCMQGPFGATCLCPLGYQLANDTKTCE. An N-linked (GlcNAc...) asparagine glycan is attached at N1384. Residues 1391–1430 enclose the EGF-like 3; calcium-binding domain; the sequence is DINECDIPGFCSQHCVNMRGSFRCACDPEYTLESDGRTCK. Residues N1451, N1497, and N1551 are each glycosylated (N-linked (GlcNAc...) asparagine). 5 LDL-receptor class B repeats span residues 1479–1521, 1522–1564, 1567–1610, 1611–1655, and 1656–1696; these read GRVF…DWIG, RNLY…DPRM, NVMF…DYPN, RLIY…FEDF, and VYWT…IHPS. 3 N-linked (GlcNAc...) asparagine glycosylation sites follow: N1676, N1733, and N1811. LDL-receptor class B repeat units follow at residues 1791–1833, 1834–1883, 1884–1931, 1932–1973, 1974–2014, 2108–2157, 2158–2202, 2203–2246, and 2247–2290; these read QFIY…DWVS, RNIY…DPAR, GKLY…DIQE, QKLY…YGSF, LYYS…YHRR, GFIY…DWAA, GNLY…DPKH, RYLF…DHDT, and GYIY…FGES. 3 N-linked (GlcNAc...) asparagine glycosylation sites follow: N2134, N2178, and N2225. Residue N2396 is glycosylated (N-linked (GlcNAc...) asparagine). LDL-receptor class B repeat units follow at residues 2432-2478, 2479-2519, 2520-2563, 2564-2605, and 2606-2647; these read NRIF…DWIN, RRIY…DPCR, GYMY…DLET, DLLY…YGQY, and IYWT…VVKT. Residues N2488 and N2548 are each glycosylated (N-linked (GlcNAc...) asparagine). LDL-receptor class A domains are found at residues 2700–2738, 2741–2777, 2780–2819, 2822–2861, 2864–2902, 2907–2946, 2949–2991, 2994–3030, 3033–3071, and 3076–3112; these read RCNQ…TVCA, TCRS…AGCL, NCNS…KNCP, TCPP…IYCA, TCRS…DTCG, TCRA…HHCE, NCSS…QNCT, TCSA…RGCS, PCHA…HLCH, and TCPL…KGCG. Disulfide bonds link C2701–C2713, C2708–C2726, C2720–C2737, C2742–C2754, C2749–C2767, C2761–C2776, C2781–C2794, C2789–C2807, C2801–C2818, C2823–C2836, C2830–C2849, C2843–C2860, C2865–C2878, C2872–C2891, C2885–C2901, C2908–C2920, C2915–C2933, and C2927–C2945. N2782 carries N-linked (GlcNAc...) asparagine glycosylation. N-linked (GlcNAc...) asparagine glycosylation occurs at N2810. N2949 carries N-linked (GlcNAc...) asparagine glycosylation. Intrachain disulfides connect C2950/C2967, C2957/C2980, C2974/C2990, C2995/C3007, C3002/C3020, C3014/C3029, C3034/C3046, C3041/C3059, C3053/C3070, C3077/C3089, C3084/C3102, C3096/C3111, C3116/C3128, C3124/C3137, C3139/C3152, C3158/C3169, C3165/C3178, and C3180/C3193. Residue N2989 is glycosylated (N-linked (GlcNAc...) asparagine). The EGF-like 4 domain maps to 3112–3153; the sequence is GINECLDSSISRCDHNCTDTITSFYCSCLPGYKLMSDKRSCV. The N-linked (GlcNAc...) asparagine glycan is linked to N3127. Residues 3154–3194 enclose the EGF-like 5; calcium-binding domain; sequence DIDECKESPQLCSQKCENVVGSYICKCAPGYIREPDGKSCR. 4 N-linked (GlcNAc...) asparagine glycosylation sites follow: N3213, N3259, N3317, and N3357. 5 LDL-receptor class B repeats span residues 3241-3283, 3284-3326, 3335-3378, 3379-3421, and 3422-3462; these read KRLY…DWVS, RKLY…EHPR, GHVY…DYTN, DLLY…FEDT, and VFWT…YHPY. A glycan (N-linked (GlcNAc...) asparagine) is linked at N3448. LDL-receptor class A domains are found at residues 3513-3551, 3554-3592, 3595-3633, 3636-3674, 3679-3717, 3720-3757, 3760-3796, and 3799-3835; these read MCSS…DLCP, FCRL…VLCE, RCES…SHCA, TCRP…DECT, NCDN…QGCE, PCHP…ENCV, ECSE…RDCE, and TCHP…SACP. 24 cysteine pairs are disulfide-bonded: C3514–C3527, C3521–C3540, C3534–C3550, C3555–C3567, C3562–C3580, C3574–C3591, C3596–C3608, C3603–C3621, C3615–C3632, C3637–C3649, C3644–C3662, C3656–C3673, C3680–C3694, C3688–C3707, C3701–C3716, C3721–C3734, C3729–C3747, C3741–C3756, C3761–C3773, C3768–C3786, C3780–C3795, C3800–C3812, C3807–C3825, and C3819–C3834. An N-linked (GlcNAc...) asparagine glycan is attached at N3566. Residue N3682 is glycosylated (N-linked (GlcNAc...) asparagine). N3840 is a glycosylation site (N-linked (GlcNAc...) asparagine). 3 LDL-receptor class A domains span residues 3843–3881, 3884–3923, and 3929–3965; these read YCPA…HLCF, PCES…EHCR, and PCTD…TGCN. Intrachain disulfides connect C3844-C3856, C3851-C3869, C3863-C3880, C3885-C3898, C3893-C3911, C3905-C3922, C3930-C3942, C3937-C3955, and C3949-C3964. The region spanning 3968 to 4003 is the EGF-like 6 domain; it reads DNRTCAENICEQNCTQLSSGGFICSCRPGFKPSTSD. Residues N3969 and N3980 are each glycosylated (N-linked (GlcNAc...) asparagine). 5 disulfides stabilise this stretch: C3972/C3981, C3977/C3991, C4013/C4023, C4019/C4032, and C4034/C4049. The EGF-like 7; calcium-binding domain occupies 4009-4050; sequence DINECEEFGICPQSCRNSKGSYECFCVDGFKSMSTHYGERCA. N4070 is a glycosylation site (N-linked (GlcNAc...) asparagine). LDL-receptor class B repeat units lie at residues 4156–4198, 4199–4242, and 4244–4285; these read RHIY…NPKL, GLMF…DYLN, and DRVY…FEDK. Residue N4329 is glycosylated (N-linked (GlcNAc...) asparagine). The EGF-like 8 domain maps to 4379 to 4413; sequence MPPPCRCMHGGNCYFDENELPKCKCSSGYSGEYCE. Intrachain disulfides connect C4383/C4391, C4385/C4401, and C4403/C4412. Residues 4426–4446 form a helical membrane-spanning segment; the sequence is MAVLLTFVIVIIVGALVLVGL. Residues 4447 to 4660 lie on the Cytoplasmic side of the membrane; sequence FHYRKTGSLL…ANLVKEDSDV (214 aa). Residues 4454-4463 carry the SH3-binding motif; sequence SLLPTLPKLP. A PxLPxI/L motif 1; mediates interaction with ANKRA2 motif is present at residues 4457-4462; sequence PTLPKL. The PxLPxI/L motif 2; mediates interaction with ANKRA2 motif lies at 4460 to 4465; it reads PKLPSL. S4464 and S4467 each carry phosphoserine. Positions 4522–4527 match the Endocytosis signal motif; sequence FENPMY. Positions 4559–4582 are disordered; it reads NYGRPIDPSEIVPEPKPASPGADE. S4577 carries the post-translational modification Phosphoserine. The interaction with DAB2 stretch occupies residues 4597–4610; the sequence is QTTNFENPIYAEMD. An NPXY motif motif is present at residues 4603 to 4606; sequence NPIY. The short motif at 4606 to 4609 is the SH2-binding element; the sequence is YAEM. Residues 4617–4660 are disordered; it reads VAVAPPPSPSLPAKASKRNLTPGYTATEDTFKDTANLVKEDSDV. An SH3-binding motif is present at residues 4619–4630; it reads VAPPPSPSLPAK. S4624 bears the Phosphoserine mark. Residues 4634–4644 show a composition bias toward polar residues; that stretch reads RNLTPGYTATE. At T4637 the chain carries Phosphothreonine. Position 4658 is a phosphoserine (S4658).

This sequence belongs to the LDLR family. As to quaternary structure, binds plasminogen, extracellular matrix components, plasminogen activator-plasminogen activator inhibitor type I complex, apolipoprotein E-enriched beta-VLDL, lipoprotein lipase, lactoferrin, CLU/clusterin and calcium. Forms a multimeric complex together with LRPAP1. Interacts (via PxLPxI/L motif) with ANKRA2 (via ankyrin repeats). Interacts with LRP2BP. Interacts (via NPXY motif) with DAB2; the interaction is not affected by tyrosine phosphorylation of the NPXY motif. Interacts with MB. Interacts with BMP4. Interacts with the Sonic hedgehog protein N-product which is the active product of SHH. Interacts with CST3 in a calcium-dependent manner. Interacts with the vitamin-D binding protein GC/DBP. Interacts with sex hormone-binding protein SHBG. Interacts with angiotensin-2. Also interacts with angiotensin 1-7. Interacts with APOM. Interacts with selenoprotein SEPP1. Interacts with LEP. Interacts with ALB. Interacts with the antiapoptotic protein BIRC5/survivin. Interacts with matrix metalloproteinase MMP2 in complex with metalloproteinase inhibitor TIMP1. In neurons, forms a trimeric complex with APP and APPB1/FE65. Interacts with LDLRAP1/ARH; mediates trafficking of LRP2 to the endocytic recycling compartment. Does not interact with beta-amyloid protein 40 alone but interacts with the complex composed of beta-amyloid protein 40 and CLU/APOJ. Interacts with MDK. A fraction undergoes proteolytic cleavage of the extracellular domain at the cell membrane to generate a cytoplasmic tail fragment. This is internalized into the early endosome from where it trafficks in an LDLRAP1/ARH-dependent manner to the endocytic recycling compartment (ERC). In the ERC, it is further cleaved by gamma-secretase to release a fragment which translocates to the nucleus and mediates transcriptional repression. Post-translationally, N-glycosylation is required for ligand binding. As to expression, in the inner ear, expressed in the lumen of the endolymphatic sac where it localizes to macrophage-like cells as well as to mitochondria-rich and ribosome-rich epithelial cells (at protein level). In the inner ear, expressed in marginal cells of the stria vascularis, epithelial cells at the spiral prominence, epithelial cells of Reissner's membrane facing the cochlear duct, and Kolliker's organ (at protein level). Expressed in the choroid plexus epithelium in the brain (at protein level). In the brain, also expressed in astrocytes (at protein level). Expression also detected in epithelial cells of the kidney glomerulus and proximal tubule, lung, epididymis and yolk sac.

The protein localises to the apical cell membrane. It is found in the endosome lumen. It localises to the membrane. The protein resides in the clathrin-coated pit. Its subcellular location is the cell projection. The protein localises to the dendrite. It is found in the axon. Its function is as follows. Multiligand endocytic receptor. Acts together with CUBN to mediate endocytosis of high-density lipoproteins. Mediates receptor-mediated uptake of polybasic drugs such as aprotinin, aminoglycosides and polymyxin B. In the kidney, mediates the tubular uptake and clearance of leptin. Also mediates transport of leptin across the blood-brain barrier through endocytosis at the choroid plexus epithelium. Endocytosis of leptin in neuronal cells is required for hypothalamic leptin signaling and leptin-mediated regulation of feeding and body weight. Mediates endocytosis and subsequent lysosomal degradation of CST3 in kidney proximal tubule cells. Mediates renal uptake of 25-hydroxyvitamin D3 in complex with the vitamin D3 transporter GC/DBP. Mediates renal uptake of metallothionein-bound heavy metals. Together with CUBN, mediates renal reabsorption of myoglobin. Mediates renal uptake and subsequent lysosomal degradation of APOM. Plays a role in kidney selenium homeostasis by mediating renal endocytosis of selenoprotein SEPP1. Mediates renal uptake of the antiapoptotic protein BIRC5/survivin which may be important for functional integrity of the kidney. Mediates renal uptake of matrix metalloproteinase MMP2 in complex with metalloproteinase inhibitor TIMP1. Mediates endocytosis of Sonic hedgehog protein N-product (ShhN), the active product of SHH. Also mediates ShhN transcytosis. In the embryonic neuroepithelium, mediates endocytic uptake and degradation of BMP4, is required for correct SHH localization in the ventral neural tube and plays a role in patterning of the ventral telencephalon. Required at the onset of neurulation to sequester SHH on the apical surface of neuroepithelial cells of the rostral diencephalon ventral midline and to control PTCH1-dependent uptake and intracellular trafficking of SHH. During neurulation, required in neuroepithelial cells for uptake of folate bound to the folate receptor FOLR1 which is necessary for neural tube closure. In the adult brain, negatively regulates BMP signaling in the subependymal zone which enables neurogenesis to proceed. In astrocytes, mediates endocytosis of ALB which is required for the synthesis of the neurotrophic factor oleic acid. Involved in neurite branching. During optic nerve development, required for SHH-mediated migration and proliferation of oligodendrocyte precursor cells. Mediates endocytic uptake and clearance of SHH in the retinal margin which protects retinal progenitor cells from mitogenic stimuli and keeps them quiescent. Plays a role in reproductive organ development by mediating uptake in reproductive tissues of androgen and estrogen bound to the sex hormone binding protein SHBG. Mediates endocytosis of angiotensin-2. Also mediates endocytosis of angiotensin 1-7. Binds to the complex composed of beta-amyloid protein 40 and CLU/APOJ and mediates its endocytosis and lysosomal degradation. Required for embryonic heart development. Required for normal hearing, possibly through interaction with estrogen in the inner ear. The sequence is that of Low-density lipoprotein receptor-related protein 2 (Lrp2) from Rattus norvegicus (Rat).